A 621-amino-acid polypeptide reads, in one-letter code: Glutathione-regulated potassium-efflux system protein KefC (621 aa).

A run of 12 helical transmembrane segments spans residues 4 to 24 (HTLI…PIAV), 26 to 46 (LGLG…PWGL), 54 to 74 (AILH…GLEL), 90 to 110 (GALQ…LLGL), 114 to 134 (VAEL…MQAM), 149 to 169 (FAVL…IPLL), 178 to 198 (LVAF…VVAL), 218 to 238 (VFSA…EEVG), 270 to 290 (GLLL…GTLV), 294 to 314 (LRIV…LWLI), 326 to 346 (RWFA…FGAA), and 359 to 379 (ALTL…VLLT). Residues 399–518 (QPRVIVAGFG…AGVEAPERET (120 aa)) form the RCK N-terminal domain. Residues 598-621 (GWQGTEEGRHTGDIADEPENKPSA) form a disordered region.

Belongs to the monovalent cation:proton antiporter 2 (CPA2) transporter (TC 2.A.37) family. KefC subfamily. In terms of assembly, homodimer. Interacts with the regulatory subunit KefF.

The protein resides in the cell inner membrane. Functionally, pore-forming subunit of a potassium efflux system that confers protection against electrophiles. Catalyzes K(+)/H(+) antiport. In Klebsiella pneumoniae (strain 342), this protein is Glutathione-regulated potassium-efflux system protein KefC.